The sequence spans 152 residues: SsrA-binding protein (152 aa).

The protein belongs to the SmpB family.

It is found in the cytoplasm. Functionally, required for rescue of stalled ribosomes mediated by trans-translation. Binds to transfer-messenger RNA (tmRNA), required for stable association of tmRNA with ribosomes. tmRNA and SmpB together mimic tRNA shape, replacing the anticodon stem-loop with SmpB. tmRNA is encoded by the ssrA gene; the 2 termini fold to resemble tRNA(Ala) and it encodes a 'tag peptide', a short internal open reading frame. During trans-translation Ala-aminoacylated tmRNA acts like a tRNA, entering the A-site of stalled ribosomes, displacing the stalled mRNA. The ribosome then switches to translate the ORF on the tmRNA; the nascent peptide is terminated with the 'tag peptide' encoded by the tmRNA and targeted for degradation. The ribosome is freed to recommence translation, which seems to be the essential function of trans-translation. This chain is SsrA-binding protein, found in Rickettsia akari (strain Hartford).